A 166-amino-acid chain; its full sequence is Gem-associated protein 6 (166 aa).

Residues 4–73 (WMKKSPLEWE…VQTVETISEG (70 aa)) form the Sm domain. The AD domain maps to 68-166 (ETISEGDHRV…LIQGHLSASQ (99 aa)). Phosphoserine is present on residues Ser94 and Ser165.

In terms of assembly, part of the core SMN complex that contains SMN1, GEMIN2/SIP1, DDX20/GEMIN3, GEMIN4, GEMIN5, GEMIN6, GEMIN7, GEMIN8 and STRAP/UNRIP. Part of the SMN-Sm complex that contains SMN1, GEMIN2/SIP1, DDX20/GEMIN3, GEMIN4, GEMIN5, GEMIN6, GEMIN7, GEMIN8, STRAP/UNRIP and the Sm proteins SNRPB, SNRPD1, SNRPD2, SNRPD3, SNRPE, SNRPF and SNRPG. Interacts with GEMIN7; the interaction is direct. Interacts with GEMIN8; the interaction is direct. Interacts with SNRPB, SNRPD2, SNRPD3 and SNRPE; the interaction is direct.

It is found in the nucleus. Its subcellular location is the nucleoplasm. The protein resides in the gem. It localises to the cytoplasm. Functionally, the SMN complex catalyzes the assembly of small nuclear ribonucleoproteins (snRNPs), the building blocks of the spliceosome, and thereby plays an important role in the splicing of cellular pre-mRNAs. Most spliceosomal snRNPs contain a common set of Sm proteins SNRPB, SNRPD1, SNRPD2, SNRPD3, SNRPE, SNRPF and SNRPG that assemble in a heptameric protein ring on the Sm site of the small nuclear RNA to form the core snRNP (Sm core). In the cytosol, the Sm proteins SNRPD1, SNRPD2, SNRPE, SNRPF and SNRPG are trapped in an inactive 6S pICln-Sm complex by the chaperone CLNS1A that controls the assembly of the core snRNP. To assemble core snRNPs, the SMN complex accepts the trapped 5Sm proteins from CLNS1A forming an intermediate. Binding of snRNA inside 5Sm triggers eviction of the SMN complex, thereby allowing binding of SNRPD3 and SNRPB to complete assembly of the core snRNP. This Mus musculus (Mouse) protein is Gem-associated protein 6 (Gemin6).